A 423-amino-acid polypeptide reads, in one-letter code: MKAELIAVGTEILTGQIVNTNAQFLSEKMAELGIDVYFQTAVGDNEERLLSVIDIASQRSDLVILCGGLGPTDDDLTKQTLAKYLGKALVFDEQAGQKLDAFFAHRKQAARTPNNQRQAQLIEGSIALQNQTGLAVGGLITVDRVTYVVLPGPPSELKPMVKNELVPLLSASHASLYSRVLRFFGIGESQLVTALEDLIKHQTDPTIAPYAKTGEVTLRLSTKADNQALADERLNRLEAQLLSIRTVDNQPLRRLLYGYGEDNSLARETFELLKRSGKTITAAESLTAGLFQAQLTDFAGASQVFNGGFITYSIEEKARMLGIPLGELQRHGVVSSFTAEQMAAQARCLTNSDIGIGLTGVAGPEALEGQPAGTVFIGLATKNKVESLKVVIGGRSRLDVRYIAALYAFNMVRKTLLKSENLL.

The protein belongs to the CinA family.

In Streptococcus equi subsp. equi (strain 4047), this protein is Putative competence-damage inducible protein.